A 455-amino-acid polypeptide reads, in one-letter code: UDP-N-acetylmuramoylalanine--D-glutamate ligase (455 aa).

117–123 (GTNGKTT) contacts ATP.

The protein belongs to the MurCDEF family.

The protein resides in the cytoplasm. The enzyme catalyses UDP-N-acetyl-alpha-D-muramoyl-L-alanine + D-glutamate + ATP = UDP-N-acetyl-alpha-D-muramoyl-L-alanyl-D-glutamate + ADP + phosphate + H(+). It functions in the pathway cell wall biogenesis; peptidoglycan biosynthesis. Cell wall formation. Catalyzes the addition of glutamate to the nucleotide precursor UDP-N-acetylmuramoyl-L-alanine (UMA). This Alkaliphilus metalliredigens (strain QYMF) protein is UDP-N-acetylmuramoylalanine--D-glutamate ligase.